The sequence spans 122 residues: uncharacterized protein (122 aa).

Positions 79–114 (VIEDVASAIKEMMESAAKDLDKIEEVIKESLEKYLR) form a coiled coil.

This is an uncharacterized protein from Archaeoglobus fulgidus (strain ATCC 49558 / DSM 4304 / JCM 9628 / NBRC 100126 / VC-16).